An 87-amino-acid polypeptide reads, in one-letter code: Tektin-2 (87 aa).

Residues 26-55 adopt a coiled-coil conformation; that stretch reads VEEELLKEVEVIEATKKALQQRVSQAFQQL.

Belongs to the tektin family. Microtubule inner protein component of sperm flagellar doublet microtubules. May interact with CCDC172. Tyrosine phosphorylated. In terms of processing, ubiquitinated, leading to its degradation. Deubiquitinated by USP16, promoting its stability. In terms of tissue distribution, detected in sperm flagella (at protein level).

It is found in the cytoplasm. It localises to the cytoskeleton. The protein resides in the cilium axoneme. Its subcellular location is the flagellum axoneme. The protein localises to the microtubule organizing center. In terms of biological role, microtubule inner protein (MIP) part of the dynein-decorated doublet microtubules (DMTs) in cilia and flagellar axoneme. Plays a key role in the assembly or attachment of the inner dynein arm to microtubules in sperm flagella and tracheal cilia. Forms filamentous polymers in the walls of ciliary and flagellar microtubules. The protein is Tektin-2 of Mesocricetus auratus (Golden hamster).